Here is a 345-residue protein sequence, read N- to C-terminus: KRR1 small subunit processome component homolog (345 aa).

One can recognise a KH domain in the interval 125–193; that stretch reads DIIKIGNLVH…VRDIVLETMN (69 aa). A compositionally biased stretch (basic residues) spans 232–245; sequence NISKRKQPKVKKQK. 2 disordered regions span residues 232–260 and 273–329; these read NISK…ESKV and QEQK…VDVK. A coiled-coil region spans residues 270–298; sequence FLNQEQKQAKRNQERTEKQKEAAKRQDER. Composition is skewed to basic and acidic residues over residues 276–302 and 315–329; these read KQAK…RNKD and LKKE…VDVK.

Belongs to the KRR1 family. Monomer. Component of the ribosomal small subunit (SSU) processome.

Its subcellular location is the nucleus. The protein resides in the nucleolus. Its function is as follows. Required for 40S ribosome biogenesis. Involved in nucleolar processing of pre-18S ribosomal RNA and ribosome assembly. Binds to RNA. Required for female germline development, cell viability during eye development and for survival of dividing cells and epithelial cells during early wing disk development. This chain is KRR1 small subunit processome component homolog, found in Drosophila erecta (Fruit fly).